The following is a 343-amino-acid chain: S-adenosylmethionine:tRNA ribosyltransferase-isomerase (343 aa).

It belongs to the QueA family. In terms of assembly, monomer.

The protein localises to the cytoplasm. The catalysed reaction is 7-aminomethyl-7-carbaguanosine(34) in tRNA + S-adenosyl-L-methionine = epoxyqueuosine(34) in tRNA + adenine + L-methionine + 2 H(+). The protein operates within tRNA modification; tRNA-queuosine biosynthesis. Functionally, transfers and isomerizes the ribose moiety from AdoMet to the 7-aminomethyl group of 7-deazaguanine (preQ1-tRNA) to give epoxyqueuosine (oQ-tRNA). This Latilactobacillus sakei subsp. sakei (strain 23K) (Lactobacillus sakei subsp. sakei) protein is S-adenosylmethionine:tRNA ribosyltransferase-isomerase.